We begin with the raw amino-acid sequence, 1055 residues long: DNA-directed RNA polymerase subunit beta' (1055 aa).

Zn(2+) contacts are provided by C60, C62, C75, and C78. Residues D449, D451, and D453 each contribute to the Mg(2+) site. Positions 818, 892, 899, and 902 each coordinate Zn(2+).

The protein belongs to the RNA polymerase beta' chain family. As to quaternary structure, the RNAP catalytic core consists of 2 alpha, 1 beta, 1 beta' and 1 omega subunit. When a sigma factor is associated with the core the holoenzyme is formed, which can initiate transcription. Requires Mg(2+) as cofactor. It depends on Zn(2+) as a cofactor.

The enzyme catalyses RNA(n) + a ribonucleoside 5'-triphosphate = RNA(n+1) + diphosphate. In terms of biological role, DNA-dependent RNA polymerase catalyzes the transcription of DNA into RNA using the four ribonucleoside triphosphates as substrates. This Pediococcus acidilactici protein is DNA-directed RNA polymerase subunit beta'.